The sequence spans 172 residues: Transcriptional repressor NrdR (172 aa).

A zinc finger spans residues Cys3–Cys34. The 91-residue stretch at Thr49–Asp139 folds into the ATP-cone domain.

Belongs to the NrdR family. The cofactor is Zn(2+).

Negatively regulates transcription of bacterial ribonucleotide reductase nrd genes and operons by binding to NrdR-boxes. In Gloeobacter violaceus (strain ATCC 29082 / PCC 7421), this protein is Transcriptional repressor NrdR.